A 351-amino-acid chain; its full sequence is Selenide, water dikinase (351 aa).

Cysteine 20 is a catalytic residue. Residues lysine 23 and 51-53 (TKD) contribute to the ATP site. Residue aspartate 54 coordinates Mg(2+). ATP is bound by residues aspartate 71, aspartate 94, and 142–144 (GHS). Aspartate 94 is a binding site for Mg(2+). Aspartate 230 provides a ligand contact to Mg(2+).

This sequence belongs to the selenophosphate synthase 1 family. Class I subfamily. Homodimer. Requires Mg(2+) as cofactor.

It catalyses the reaction hydrogenselenide + ATP + H2O = selenophosphate + AMP + phosphate + 2 H(+). Its function is as follows. Synthesizes selenophosphate from selenide and ATP. This is Selenide, water dikinase from Pasteurella multocida (strain Pm70).